Reading from the N-terminus, the 274-residue chain is 3-methyl-2-oxobutanoate hydroxymethyltransferase (274 aa).

Mg(2+)-binding residues include Asp44 and Asp83. 3-methyl-2-oxobutanoate contacts are provided by residues 44 to 45, Asp83, and Lys113; that span reads DS. Glu115 serves as a coordination point for Mg(2+). Glu182 serves as the catalytic Proton acceptor.

Belongs to the PanB family. In terms of assembly, homodecamer; pentamer of dimers. It depends on Mg(2+) as a cofactor.

Its subcellular location is the cytoplasm. The enzyme catalyses 3-methyl-2-oxobutanoate + (6R)-5,10-methylene-5,6,7,8-tetrahydrofolate + H2O = 2-dehydropantoate + (6S)-5,6,7,8-tetrahydrofolate. Its pathway is cofactor biosynthesis; (R)-pantothenate biosynthesis; (R)-pantoate from 3-methyl-2-oxobutanoate: step 1/2. In terms of biological role, catalyzes the reversible reaction in which hydroxymethyl group from 5,10-methylenetetrahydrofolate is transferred onto alpha-ketoisovalerate to form ketopantoate. This Campylobacter jejuni (strain RM1221) protein is 3-methyl-2-oxobutanoate hydroxymethyltransferase.